Here is a 339-residue protein sequence, read N- to C-terminus: GTPase Era (339 aa).

In terms of domain architecture, RPE1 insert spans 4–48; that stretch reads RHLAKFAYREEFKGDTEALAAAVREDASTGSTSQLPLEVQFGKMS. Positions 51–220 constitute an Era-type G domain; the sequence is KTVSVCIIGR…ITSKAKISPW (170 aa). Residues 59–66 are G1; it reads GRPNSGKS. 59-66 lines the GTP pocket; the sequence is GRPNSGKS. The tract at residues 85-89 is G2; the sequence is QTTRS. The interval 106–109 is G3; it reads DTPG. GTP-binding positions include 106–110 and 168–171; these read DTPGI and NKID. The segment at 168 to 171 is G4; the sequence is NKID. The interval 196 to 198 is G5; it reads ISA. The KH type-2 domain occupies 248 to 325; that stretch reads LQKELPYKLT…HLFLFVKVRE (78 aa).

The protein belongs to the TRAFAC class TrmE-Era-EngA-EngB-Septin-like GTPase superfamily. Era GTPase family. In terms of assembly, monomer.

The protein localises to the cytoplasm. The protein resides in the cell inner membrane. Functionally, an essential GTPase that binds both GDP and GTP, with rapid nucleotide exchange. Plays a role in 16S rRNA processing and 30S ribosomal subunit biogenesis and possibly also in cell cycle regulation and energy metabolism. The polypeptide is GTPase Era (Rickettsia conorii (strain ATCC VR-613 / Malish 7)).